Reading from the N-terminus, the 415-residue chain is L-cysteine:1D-myo-inositol 2-amino-2-deoxy-alpha-D-glucopyranoside ligase (415 aa).

The disordered stretch occupies residues 1-20 (MQSWSETAVPSVPGQGPPLR). Zn(2+) is bound at residue cysteine 43. Residues 43–46 (CGIT), threonine 58, and 81–83 (NVT) each bind L-cysteinyl-5'-AMP. A 'HIGH' region motif is present at residues 45 to 55 (ITPYDATHLGH). Positions 187-192 (ERGGDP) match the 'ERGGDP' region motif. Position 227 (tryptophan 227) interacts with L-cysteinyl-5'-AMP. Cysteine 231 provides a ligand contact to Zn(2+). 249–251 (GSD) is a binding site for L-cysteinyl-5'-AMP. Histidine 256 is a binding site for Zn(2+). L-cysteinyl-5'-AMP is bound at residue isoleucine 283. Positions 289–293 (KMSKS) match the 'KMSKS' region motif.

This sequence belongs to the class-I aminoacyl-tRNA synthetase family. MshC subfamily. Monomer. Requires Zn(2+) as cofactor.

The catalysed reaction is 1D-myo-inositol 2-amino-2-deoxy-alpha-D-glucopyranoside + L-cysteine + ATP = 1D-myo-inositol 2-(L-cysteinylamino)-2-deoxy-alpha-D-glucopyranoside + AMP + diphosphate + H(+). Its function is as follows. Catalyzes the ATP-dependent condensation of GlcN-Ins and L-cysteine to form L-Cys-GlcN-Ins. This is L-cysteine:1D-myo-inositol 2-amino-2-deoxy-alpha-D-glucopyranoside ligase from Rhodococcus jostii (strain RHA1).